The chain runs to 616 residues: Proline--tRNA ligase (616 aa).

The protein belongs to the class-II aminoacyl-tRNA synthetase family. ProS type 1 subfamily. As to quaternary structure, homodimer.

It localises to the cytoplasm. The enzyme catalyses tRNA(Pro) + L-proline + ATP = L-prolyl-tRNA(Pro) + AMP + diphosphate. Catalyzes the attachment of proline to tRNA(Pro) in a two-step reaction: proline is first activated by ATP to form Pro-AMP and then transferred to the acceptor end of tRNA(Pro). As ProRS can inadvertently accommodate and process non-cognate amino acids such as alanine and cysteine, to avoid such errors it has two additional distinct editing activities against alanine. One activity is designated as 'pretransfer' editing and involves the tRNA(Pro)-independent hydrolysis of activated Ala-AMP. The other activity is designated 'posttransfer' editing and involves deacylation of mischarged Ala-tRNA(Pro). The misacylated Cys-tRNA(Pro) is not edited by ProRS. This chain is Proline--tRNA ligase, found in Lactococcus lactis subsp. lactis (strain IL1403) (Streptococcus lactis).